The chain runs to 890 residues: Nitrate reductase [NADH] 2 (890 aa).

Residue C165 participates in Mo-molybdopterin binding. Residues 513–588 (SKMFSVSEVK…LEDYRIGELI (76 aa)) form the Cytochrome b5 heme-binding domain. Heme contacts are provided by H548 and H571. In terms of domain architecture, FAD-binding FR-type spans 634 to 746 (RQKIPCKLVS…KGPLGHIEYT (113 aa)). FAD contacts are provided by residues 686–689 (RAYT), 703–707 (LIKVY), F708, F715, 720–722 (LMS), and T773.

The protein belongs to the nitrate reductase family. In terms of assembly, homodimer. FAD is required as a cofactor. It depends on heme as a cofactor. Requires Mo-molybdopterin as cofactor.

The enzyme catalyses nitrite + NAD(+) + H2O = nitrate + NADH + H(+). Its function is as follows. Nitrate reductase is a key enzyme involved in the first step of nitrate assimilation in plants, fungi and bacteria. This is Nitrate reductase [NADH] 2 (NIA2) from Phaseolus vulgaris (Kidney bean).